We begin with the raw amino-acid sequence, 93 residues long: Integration host factor subunit beta (93 aa).

It belongs to the bacterial histone-like protein family. In terms of assembly, heterodimer of an alpha and a beta chain.

In terms of biological role, this protein is one of the two subunits of integration host factor, a specific DNA-binding protein that functions in genetic recombination as well as in transcriptional and translational control. The polypeptide is Integration host factor subunit beta (Cereibacter sphaeroides (strain KD131 / KCTC 12085) (Rhodobacter sphaeroides)).